The following is a 146-amino-acid chain: MIRKRRKITRMRGSRTVGGGCSKKRRGAGHRGGRGQAGGHKHHWTWIVKYDPKHFGKYGFKRPQKLIKRLETVNLAYLDEMIPELLERGVASEEDGMVVLDVRDLGFEKVLGSGRITRPVHLKAYEFSRSATEKIEEAGGKAEVIE.

2 stretches are compositionally biased toward basic residues: residues 1–13 (MIRK…RMRG) and 22–38 (SKKR…GQAG). The interval 1-38 (MIRKRRKITRMRGSRTVGGGCSKKRRGAGHRGGRGQAG) is disordered.

It belongs to the universal ribosomal protein uL15 family. Part of the 50S ribosomal subunit.

Binds to the 23S rRNA. The sequence is that of Large ribosomal subunit protein uL15 from Methanothermobacter thermautotrophicus (strain ATCC 29096 / DSM 1053 / JCM 10044 / NBRC 100330 / Delta H) (Methanobacterium thermoautotrophicum).